A 126-amino-acid polypeptide reads, in one-letter code: Holo-[acyl-carrier-protein] synthase (126 aa).

Positions 9 and 58 each coordinate Mg(2+).

The protein belongs to the P-Pant transferase superfamily. AcpS family. Mg(2+) is required as a cofactor.

It localises to the cytoplasm. It catalyses the reaction apo-[ACP] + CoA = holo-[ACP] + adenosine 3',5'-bisphosphate + H(+). Functionally, transfers the 4'-phosphopantetheine moiety from coenzyme A to a Ser of acyl-carrier-protein. The chain is Holo-[acyl-carrier-protein] synthase from Salmonella agona (strain SL483).